A 233-amino-acid polypeptide reads, in one-letter code: Large ribosomal subunit protein uL1 (233 aa).

This sequence belongs to the universal ribosomal protein uL1 family. In terms of assembly, part of the 50S ribosomal subunit.

Functionally, binds directly to 23S rRNA. The L1 stalk is quite mobile in the ribosome, and is involved in E site tRNA release. In terms of biological role, protein L1 is also a translational repressor protein, it controls the translation of the L11 operon by binding to its mRNA. In Shewanella halifaxensis (strain HAW-EB4), this protein is Large ribosomal subunit protein uL1.